Here is a 346-residue protein sequence, read N- to C-terminus: Phosphate acyltransferase (346 aa).

The protein belongs to the PlsX family. In terms of assembly, homodimer. Probably interacts with PlsY.

It localises to the cytoplasm. The enzyme catalyses a fatty acyl-[ACP] + phosphate = an acyl phosphate + holo-[ACP]. It functions in the pathway lipid metabolism; phospholipid metabolism. Catalyzes the reversible formation of acyl-phosphate (acyl-PO(4)) from acyl-[acyl-carrier-protein] (acyl-ACP). This enzyme utilizes acyl-ACP as fatty acyl donor, but not acyl-CoA. In Pelobacter propionicus (strain DSM 2379 / NBRC 103807 / OttBd1), this protein is Phosphate acyltransferase.